Consider the following 2327-residue polypeptide: Chondroitin sulfate proteoglycan 4 (2327 aa).

Residues 1–29 (MLLGPGHPLSAPALALALTLALLVRSTAP) form the signal peptide. Laminin G-like domains lie at 30–193 (ASFF…HEGC) and 203–381 (VGLG…SAGC). The interval 30 to 640 (ASFFGENHLE…HRGGPAQDLT (611 aa)) is globular or compact configuration stabilized by disulfide bonds. A neurite growth inhibition region spans residues 30–640 (ASFFGENHLE…HRGGPAQDLT (611 aa)). At 30 to 2229 (ASFFGENHLE…LGFLEANMFS (2200 aa)) the chain is on the extracellular side. N-linked (GlcNAc...) asparagine glycosylation is present at N130. The cysteines at positions 170 and 193 are disulfide-linked. Residue N349 is glycosylated (N-linked (GlcNAc...) asparagine). The cysteines at positions 355 and 381 are disulfide-linked. N428 carries an N-linked (GlcNAc...) asparagine glycan. CSPG repeat units follow at residues 429 to 524 (FTQL…LEVS), 554 to 646 (PRII…VSDG), and 663 to 765 (AIQI…LEVQ). Residues 575–1045 (GPEIFQAYDP…RGGQRLLTTD (471 aa)) form an interaction with COL6A2 region. An interaction with COL5A1 region spans residues 632–1451 (RGGPAQDLTF…SETQTDAFVL (820 aa)). N686 and N773 each carry an N-linked (GlcNAc...) asparagine glycan. CSPG repeat units lie at residues 784-883 (TVWM…FRVT) and 903-994 (NAPV…FVAT). S1000 is a glycosylation site (O-linked (Xyl...) (chondroitin sulfate) serine). 9 CSPG repeats span residues 1023 to 1115 (APVQ…VSDG), 1131 to 1221 (YLHV…FSVA), 1243 to 1342 (PLQL…LDVA), 1361 to 1454 (TVIP…LLAN), 1478 to 1568 (PPVL…LSDG), 1586 to 1684 (LLSL…LLLS), 1709 to 1808 (PSRL…FRAH), 1837 to 1929 (PPQP…MSDG), and 1946 to 2034 (TIEV…VVAL). N1136 and N1207 each carry an N-linked (GlcNAc...) asparagine glycan. Residues N1369 and N1454 are each glycosylated (N-linked (GlcNAc...) asparagine). Positions 1591–2226 (GTRKLTVCPE…GGFLGFLEAN (636 aa)) are neurite growth inhibition. Positions 1592–2226 (TRKLTVCPES…GGFLGFLEAN (635 aa)) are cysteine-containing. A glycan (N-linked (GlcNAc...) asparagine) is linked at N1650. 5 N-linked (GlcNAc...) asparagine glycosylation sites follow: N1914, N2021, N2039, N2045, and N2080. The stretch at 2043 to 2152 (TVNVTVQALL…AGDRLTLELW (110 aa)) is one CSPG 15 repeat. The tract at residues 2190 to 2210 (ETEKPGRSVPTGQPGQAASSP) is disordered. Over residues 2199 to 2210 (PTGQPGQAASSP) the composition is skewed to polar residues. The chain crosses the membrane as a helical span at residues 2230–2250 (IIIPVCLILLLLALILPLLFY). The Cytoplasmic segment spans residues 2251-2327 (LRKRNKTGKH…PALRNGQYWV (77 aa)). At T2257 the chain carries Phosphothreonine; by PKC/PRKCA. A PDZ-binding motif is present at residues 2325 to 2327 (YWV).

Interacts with ITGA4 through its chondroitin sulfate glycosaminoglycan. Interacts with BCAR1, CDC42 and ACK1. Interacts with MMP16. Interacts with the first PDZ domain of MPDZ. Interacts with PRKCA. Interacts with LGALS3 and the integrin composed of ITGB1 and ITGA3. Binds TNC, laminin-1, COL5A1 and COL6A2. Interacts with PLG and angiostatin. Binds FGF2 and PDGFA. Interacts with GRIP1, GRIP2 and GRIA2. Forms a ternary complex with GRIP1 and GRIA2. Post-translationally, O-glycosylated; contains glycosaminoglycan chondroitin sulfate which are required for proper localization and function in stress fiber formation. Involved in interaction with MMP16 and ITGA4. In terms of processing, phosphorylation by PRKCA regulates its subcellular location and function in cell motility. As to expression, expressed in microcascular pericytes and not endothelial cells.

Its subcellular location is the cell membrane. It localises to the apical cell membrane. The protein localises to the cell projection. It is found in the lamellipodium membrane. The protein resides in the cell surface. Proteoglycan playing a role in cell proliferation and migration which stimulates endothelial cells motility during microvascular morphogenesis. May also inhibit neurite outgrowth and growth cone collapse during axon regeneration. Cell surface receptor for collagen alpha 2(VI) which may confer cells ability to migrate on that substrate. Binds through its extracellular N-terminus growth factors, extracellular matrix proteases modulating their activity. May regulate MPP16-dependent degradation and invasion of type I collagen participating in melanoma cells invasion properties. May modulate the plasminogen system by enhancing plasminogen activation and inhibiting angiostatin. Also functions as a signal transducing protein by binding through its cytoplasmic C-terminus scaffolding and signaling proteins. May promote retraction fiber formation and cell polarization through Rho GTPase activation. May stimulate alpha-4, beta-1 integrin-mediated adhesion and spreading by recruiting and activating a signaling cascade through CDC42, ACK1 and BCAR1. May activate FAK and ERK1/ERK2 signaling cascades. The sequence is that of Chondroitin sulfate proteoglycan 4 (Cspg4) from Mus musculus (Mouse).